A 430-amino-acid polypeptide reads, in one-letter code: Dihydrofolate synthase/folylpolyglutamate synthase (430 aa).

51-54 (GKGS) provides a ligand contact to ATP. Ser75 is a Mg(2+) binding site. 114 to 117 (TEYG) contributes to the 7,8-dihydropteroate binding site. Glu145 contacts Mg(2+). 152–154 (FDS) is a binding site for 7,8-dihydropteroate. His172 serves as a coordination point for Mg(2+). Positions 263, 302, and 315 each coordinate ATP.

The protein belongs to the folylpolyglutamate synthase family. In terms of assembly, monomer. Requires Mg(2+) as cofactor.

It carries out the reaction 7,8-dihydropteroate + L-glutamate + ATP = 7,8-dihydrofolate + ADP + phosphate + H(+). It catalyses the reaction (6S)-5,6,7,8-tetrahydrofolyl-(gamma-L-Glu)(n) + L-glutamate + ATP = (6S)-5,6,7,8-tetrahydrofolyl-(gamma-L-Glu)(n+1) + ADP + phosphate + H(+). Its pathway is cofactor biosynthesis; tetrahydrofolate biosynthesis; 7,8-dihydrofolate from 2-amino-4-hydroxy-6-hydroxymethyl-7,8-dihydropteridine diphosphate and 4-aminobenzoate: step 2/2. The protein operates within cofactor biosynthesis; tetrahydrofolylpolyglutamate biosynthesis. Functionally, functions in two distinct reactions of the de novo folate biosynthetic pathway. Catalyzes the addition of a glutamate residue to dihydropteroate (7,8-dihydropteroate or H2Pte) to form dihydrofolate (7,8-dihydrofolate monoglutamate or H2Pte-Glu). Also catalyzes successive additions of L-glutamate to tetrahydrofolate, leading to folylpolyglutamate derivatives. The chain is Dihydrofolate synthase/folylpolyglutamate synthase (folC) from Bacillus subtilis (strain 168).